The sequence spans 778 residues: Aerobic respiration control sensor protein ArcB (778 aa).

Over 1–25 (MKQIRLLAQYYVDLMMKLGLVRFSM) the chain is Cytoplasmic. The chain crosses the membrane as a helical span at residues 26–46 (LLALALVVLAIVVQMAVTMVL). Residues 47 to 57 (HGQVESIDVIR) are Periplasmic-facing. A helical membrane pass occupies residues 58 to 78 (SIFFGLLITPWAVYFLSVVVE). The Cytoplasmic segment spans residues 79–778 (QLEESRQRLS…KAWVAKATKK (700 aa)). The 71-residue stretch at 153–223 (QSSFLRSFLD…ETDEKVFRHN (71 aa)) folds into the PAS domain. One can recognise a PAC domain in the interval 226–278 (LTYEQWLDYPDGRKACFEIRKVPYYDRVGKRHGLMGFGRDITERKRYQDALER). The region spanning 289-507 (TISHELRTPL…TFTLTIHAPS (219 aa)) is the Histidine kinase domain. The residue at position 292 (histidine 292) is a Phosphohistidine; by autocatalysis. Residues 527 to 643 (NVLLVEDIEL…ALTAMIKKFW (117 aa)) enclose the Response regulatory domain. Aspartate 576 is modified (4-aspartylphosphate). The region spanning 678 to 771 (GPKLITDGLA…RHDVEVLKAW (94 aa)) is the HPt domain. Histidine 717 bears the Phosphohistidine mark.

Activation requires a sequential transfer of a phosphate group from a His in the primary transmitter domain, to an Asp in the receiver domain and to a His in the secondary transmitter domain.

The protein localises to the cell inner membrane. It carries out the reaction ATP + protein L-histidine = ADP + protein N-phospho-L-histidine.. In terms of biological role, member of the two-component regulatory system ArcB/ArcA. Sensor-regulator protein for anaerobic repression of the arc modulon. Activates ArcA via a four-step phosphorelay. ArcB can also dephosphorylate ArcA by a reverse phosphorelay involving His-717 and Asp-576. The protein is Aerobic respiration control sensor protein ArcB (arcB) of Escherichia coli O157:H7.